Reading from the N-terminus, the 42-residue chain is uncharacterized protein (42 aa).

It is found in the cytoplasm. This is an uncharacterized protein from Escherichia coli (strain K12).